A 347-amino-acid chain; its full sequence is 3-keto-steroid reductase ERG27 (347 aa).

NADP(+) contacts are provided by Leu15, Thr38, and Arg44. Active-site proton donor residues include Ser179 and Tyr202. Residues Tyr202, Lys206, and Ser237 each coordinate NADP(+). Lys206 functions as the Lowers pKa of active site Tyr in the catalytic mechanism. Position 345 is a phosphothreonine (Thr345).

The protein belongs to the short-chain dehydrogenases/reductases (SDR) family. ERG27 subfamily. Heterotetramer of ERG25, ERG26, ERG27 and ERG28. ERG28 acts as a scaffold to tether ERG27 and other 4,4-demethylation-related enzymes, forming a demethylation enzyme complex, in the endoplasmic reticulum. Interacts with ERG25 and ERG28. Also interacts with ERG7, but only in lipid particles.

The protein resides in the endoplasmic reticulum membrane. It localises to the lipid droplet. The enzyme catalyses 3-dehydro-4alpha-methylzymosterol + NADPH + H(+) = 4alpha-methylzymosterol + NADP(+). Its pathway is steroid biosynthesis; zymosterol biosynthesis; zymosterol from lanosterol: step 5/6. Its function is as follows. 3-keto-steroid reductase; part of the third module of ergosterol biosynthesis pathway that includes the late steps of the pathway. ERG27 is a catalytic component of the C-4 demethylation complex that catalyze the reduction of the keto group on the C-3. The third module or late pathway involves the ergosterol synthesis itself through consecutive reactions that mainly occur in the endoplasmic reticulum (ER) membrane. Firstly, the squalene synthase ERG9 catalyzes the condensation of 2 farnesyl pyrophosphate moieties to form squalene, which is the precursor of all steroids. Squalene synthase is crucial for balancing the incorporation of farnesyl diphosphate (FPP) into sterol and nonsterol isoprene synthesis. Secondly, the squalene epoxidase ERG1 catalyzes the stereospecific oxidation of squalene to (S)-2,3-epoxysqualene, which is considered to be a rate-limiting enzyme in steroid biosynthesis. Then, the lanosterol synthase ERG7 catalyzes the cyclization of (S)-2,3 oxidosqualene to lanosterol, a reaction that forms the sterol core. In the next steps, lanosterol is transformed to zymosterol through a complex process involving various demethylation, reduction and desaturation reactions. The lanosterol 14-alpha-demethylase ERG11 (also known as CYP51) catalyzes C14-demethylation of lanosterol to produce 4,4'-dimethyl cholesta-8,14,24-triene-3-beta-ol, which is critical for ergosterol biosynthesis. The C-14 reductase ERG24 reduces the C14=C15 double bond of 4,4-dimethyl-cholesta-8,14,24-trienol to produce 4,4-dimethyl-cholesta-8,24-dienol. 4,4-dimethyl-cholesta-8,24-dienol is substrate of the C-4 demethylation complex ERG25-ERG26-ERG27 in which ERG25 catalyzes the three-step monooxygenation required for the demethylation of 4,4-dimethyl and 4alpha-methylsterols, ERG26 catalyzes the oxidative decarboxylation that results in a reduction of the 3-beta-hydroxy group at the C-3 carbon to an oxo group, and ERG27 is responsible for the reduction of the keto group on the C-3. ERG28 has a role as a scaffold to help anchor ERG25, ERG26 and ERG27 to the endoplasmic reticulum and ERG29 regulates the activity of the iron-containing C4-methylsterol oxidase ERG25. Then, the sterol 24-C-methyltransferase ERG6 catalyzes the methyl transfer from S-adenosyl-methionine to the C-24 of zymosterol to form fecosterol. The C-8 sterol isomerase ERG2 catalyzes the reaction which results in unsaturation at C-7 in the B ring of sterols and thus converts fecosterol to episterol. The sterol-C5-desaturase ERG3 then catalyzes the introduction of a C-5 double bond in the B ring to produce 5-dehydroepisterol. The C-22 sterol desaturase ERG5 further converts 5-dehydroepisterol into ergosta-5,7,22,24(28)-tetraen-3beta-ol by forming the C-22(23) double bond in the sterol side chain. Finally, ergosta-5,7,22,24(28)-tetraen-3beta-ol is substrate of the C-24(28) sterol reductase ERG4 to produce ergosterol. Facilitates the association of ERG7 with lipid particles preventing its digestion in the endoplasmic reticulum and the lipid particles. In Saccharomyces cerevisiae (strain ATCC 204508 / S288c) (Baker's yeast), this protein is 3-keto-steroid reductase ERG27.